Here is a 410-residue protein sequence, read N- to C-terminus: Large ribosomal subunit protein uL4 (410 aa).

The protein belongs to the universal ribosomal protein uL4 family.

It localises to the cytoplasm. The sequence is that of Large ribosomal subunit protein uL4 (RPL4) from Tetrahymena thermophila (strain SB210).